Reading from the N-terminus, the 220-residue chain is RNA-free ribonuclease P (220 aa).

Belongs to the HARP family.

The enzyme catalyses Endonucleolytic cleavage of RNA, removing 5'-extranucleotides from tRNA precursor.. In terms of biological role, RNA-free RNase P that catalyzes the removal of the 5'-leader sequence from pre-tRNA to produce the mature 5'-terminus. The chain is RNA-free ribonuclease P from Methanothermobacter thermautotrophicus (strain ATCC 29096 / DSM 1053 / JCM 10044 / NBRC 100330 / Delta H) (Methanobacterium thermoautotrophicum).